Reading from the N-terminus, the 416-residue chain is Formyl-CoA:oxalate CoA-transferase (416 aa).

CoA is bound by residues 17–18 (QS), Arg-38, 72–75 (LNTK), 96–98 (NFH), His-104, and 137–140 (KAYE). Residue Asp-169 is the Nucleophile of the active site. 248 to 250 (GGQ) contributes to the substrate binding site. Residue 273–275 (QEQ) participates in CoA binding.

Belongs to the CoA-transferase III family. Frc subfamily. As to quaternary structure, homodimer.

The enzyme catalyses formyl-CoA + oxalate = oxalyl-CoA + formate. It functions in the pathway metabolic intermediate degradation; oxalate degradation; CO(2) and formate from oxalate: step 1/2. Involved in the catabolism of oxalate and in the adapatation to low pH via the induction of the oxalate-dependent acid tolerance response (ATR). Catalyzes the transfer of the CoA moiety from formyl-CoA to oxalate. This chain is Formyl-CoA:oxalate CoA-transferase, found in Escherichia coli O6:H1 (strain CFT073 / ATCC 700928 / UPEC).